A 161-amino-acid polypeptide reads, in one-letter code: Protein-lysine N-methyltransferase (161 aa).

The DxGxGxG SAM-binding motif motif lies at 34-40 (DLGCGDG).

The protein belongs to the class I-like SAM-binding methyltransferase superfamily. In terms of assembly, monomer.

The catalysed reaction is L-lysyl-[protein] + S-adenosyl-L-methionine = N(6)-methyl-L-lysyl-[protein] + S-adenosyl-L-homocysteine + H(+). In terms of biological role, catalyzes the methylation of lysine residues in target proteins, using S-adenosyl-L-methionine (SAM) as the methyl donor. Exhibits broad substrate specificity, being able to methylate the crenarchaeal chromatin protein Cren7 primarily at 'Lys-11', 'Lys-16' and 'Lys-31', as well as a number of recombinant Sulfolobus proteins in vitro. Methylates lysine residues in a rather sequence-independent manner. This is Protein-lysine N-methyltransferase from Saccharolobus islandicus (strain REY15A) (Sulfolobus islandicus).